A 92-amino-acid chain; its full sequence is C-C motif chemokine 3 (92 aa).

A signal peptide spans methionine 1–alanine 26. Intrachain disulfides connect cysteine 33–cysteine 57 and cysteine 34–cysteine 73.

It belongs to the intercrine beta (chemokine CC) family. Self-associates. Also heterodimer of MIP-1-alpha(4-69) and MIP-1-beta(3-69). Interacts with CCR1.

It is found in the secreted. Its function is as follows. Monokine with inflammatory and chemokinetic properties. Binds to CCR1, CCR4 and CCR5. One of the major HIV-suppressive factors produced by CD8+ T-cells. Recombinant MIP-1-alpha induces a dose-dependent inhibition of different strains of HIV-1, HIV-2, and simian immunodeficiency virus (SIV). In Macaca mulatta (Rhesus macaque), this protein is C-C motif chemokine 3 (CCL3).